The following is a 249-amino-acid chain: DNA polymerase sliding clamp (249 aa).

Belongs to the PCNA family. Homotrimer. The subunits circularize to form a toroid; DNA passes through its center. Replication factor C (RFC) is required to load the toroid on the DNA.

Functionally, sliding clamp subunit that acts as a moving platform for DNA processing. Responsible for tethering the catalytic subunit of DNA polymerase and other proteins to DNA during high-speed replication. The chain is DNA polymerase sliding clamp from Thermococcus gammatolerans (strain DSM 15229 / JCM 11827 / EJ3).